The primary structure comprises 238 residues: Zinc finger protein ZAT6 (238 aa).

Over residues Met-1 to Met-15 the composition is skewed to polar residues. The tract at residues Met-1–Asp-42 is disordered. The Nuclear localization signal motif lies at Lys-30–Arg-38. 2 C2H2-type zinc fingers span residues Tyr-89–His-111 and His-148–His-170. Positions Asn-175–Phe-202 are disordered. Low complexity predominate over residues Ser-180–Ser-193.

The protein localises to the nucleus. In terms of biological role, probable transcription factor that regulates root development and phosphate (Pi) acquisition and homeostasis. Probably acts as a repressor of primary root growth and regulates Pi homeostasis through the control of root architecture. The polypeptide is Zinc finger protein ZAT6 (ZAT6) (Arabidopsis thaliana (Mouse-ear cress)).